A 206-amino-acid polypeptide reads, in one-letter code: N-(5'-phosphoribosyl)anthranilate isomerase (206 aa).

The protein belongs to the TrpF family.

The enzyme catalyses N-(5-phospho-beta-D-ribosyl)anthranilate = 1-(2-carboxyphenylamino)-1-deoxy-D-ribulose 5-phosphate. The protein operates within amino-acid biosynthesis; L-tryptophan biosynthesis; L-tryptophan from chorismate: step 3/5. The sequence is that of N-(5'-phosphoribosyl)anthranilate isomerase from Pseudomonas putida (strain W619).